A 432-amino-acid chain; its full sequence is Ribosomal protein uS12 methylthiotransferase RimO (432 aa).

Residues 4-122 (KTIDIITLGC…LLQDLGKAYH (119 aa)) enclose the MTTase N-terminal domain. [4Fe-4S] cluster contacts are provided by Cys-13, Cys-51, Cys-85, Cys-146, Cys-150, and Cys-153. Positions 132 to 363 (TTPKHYAYLK…MAIQQGISTE (232 aa)) constitute a Radical SAM core domain. Residues 366–432 (ASKVGQKMKV…DEFDLFGEII (67 aa)) form the TRAM domain.

Belongs to the methylthiotransferase family. RimO subfamily. Requires [4Fe-4S] cluster as cofactor.

Its subcellular location is the cytoplasm. The catalysed reaction is L-aspartate(89)-[ribosomal protein uS12]-hydrogen + (sulfur carrier)-SH + AH2 + 2 S-adenosyl-L-methionine = 3-methylsulfanyl-L-aspartate(89)-[ribosomal protein uS12]-hydrogen + (sulfur carrier)-H + 5'-deoxyadenosine + L-methionine + A + S-adenosyl-L-homocysteine + 2 H(+). Catalyzes the methylthiolation of an aspartic acid residue of ribosomal protein uS12. This is Ribosomal protein uS12 methylthiotransferase RimO from Bacteroides fragilis (strain ATCC 25285 / DSM 2151 / CCUG 4856 / JCM 11019 / LMG 10263 / NCTC 9343 / Onslow / VPI 2553 / EN-2).